The primary structure comprises 680 residues: DNA-directed RNA polymerase subunit beta' (680 aa).

Zn(2+) is bound by residues C69, C71, C87, and C90. The Mg(2+) site is built by D489, D491, and D493.

This sequence belongs to the RNA polymerase beta' chain family. RpoC1 subfamily. As to quaternary structure, in plastids the minimal PEP RNA polymerase catalytic core is composed of four subunits: alpha, beta, beta', and beta''. When a (nuclear-encoded) sigma factor is associated with the core the holoenzyme is formed, which can initiate transcription. Mg(2+) is required as a cofactor. The cofactor is Zn(2+).

The protein localises to the plastid. Its subcellular location is the chloroplast. The enzyme catalyses RNA(n) + a ribonucleoside 5'-triphosphate = RNA(n+1) + diphosphate. Functionally, DNA-dependent RNA polymerase catalyzes the transcription of DNA into RNA using the four ribonucleoside triphosphates as substrates. In Barbarea verna (Land cress), this protein is DNA-directed RNA polymerase subunit beta'.